A 214-amino-acid polypeptide reads, in one-letter code: 3,4-dihydroxy-2-butanone 4-phosphate synthase (214 aa).

D-ribulose 5-phosphate-binding positions include 37–38 (RE), D42, 150–154 (RPGHT), and E174. E38 provides a ligand contact to Mg(2+). A Mg(2+)-binding site is contributed by H153.

This sequence belongs to the DHBP synthase family. As to quaternary structure, homodimer. Mg(2+) serves as cofactor. Requires Mn(2+) as cofactor.

The catalysed reaction is D-ribulose 5-phosphate = (2S)-2-hydroxy-3-oxobutyl phosphate + formate + H(+). It participates in cofactor biosynthesis; riboflavin biosynthesis; 2-hydroxy-3-oxobutyl phosphate from D-ribulose 5-phosphate: step 1/1. Functionally, catalyzes the conversion of D-ribulose 5-phosphate to formate and 3,4-dihydroxy-2-butanone 4-phosphate. This chain is 3,4-dihydroxy-2-butanone 4-phosphate synthase, found in Mannheimia succiniciproducens (strain KCTC 0769BP / MBEL55E).